Reading from the N-terminus, the 209-residue chain is COP9 signalosome complex subunit 8 (209 aa).

Positions 8 to 179 constitute a PCI domain; the sequence is ESAFSFKKLL…GALDVSFNKF (172 aa). At S175 the chain carries Phosphoserine.

This sequence belongs to the CSN8 family. As to quaternary structure, component of the CSN complex, composed of COPS1/GPS1, COPS2, COPS3, COPS4, COPS5, COPS6, COPS7 (COPS7A or COPS7B), COPS8 and COPS9. In the complex, it probably interacts directly with COPS3, COPS4 and COPS7 (COPS7A or COPS7B).

It is found in the cytoplasm. Its subcellular location is the nucleus. Functionally, component of the COP9 signalosome complex (CSN), a complex involved in various cellular and developmental processes. The CSN complex is an essential regulator of the ubiquitin (Ubl) conjugation pathway by mediating the deneddylation of the cullin subunits of SCF-type E3 ligase complexes, leading to decrease the Ubl ligase activity of SCF-type complexes such as SCF, CSA or DDB2. The complex is also involved in phosphorylation of p53/TP53, c-jun/JUN, IkappaBalpha/NFKBIA, ITPK1 and IRF8/ICSBP, possibly via its association with CK2 and PKD kinases. CSN-dependent phosphorylation of TP53 and JUN promotes and protects degradation by the Ubl system, respectively. The chain is COP9 signalosome complex subunit 8 (COPS8) from Pongo abelii (Sumatran orangutan).